A 488-amino-acid polypeptide reads, in one-letter code: Ribulose bisphosphate carboxylase large chain (488 aa).

Substrate is bound by residues Asn128 and Thr178. Lys180 functions as the Proton acceptor in the catalytic mechanism. A substrate-binding site is contributed by Lys182. 3 residues coordinate Mg(2+): Lys206, Asp208, and Glu209. An N6-carboxylysine modification is found at Lys206. Residue His298 is the Proton acceptor of the active site. Residues Arg299, His331, and Ser383 each coordinate substrate.

This sequence belongs to the RuBisCO large chain family. Type I subfamily. As to quaternary structure, heterohexadecamer of 8 large chains and 8 small chains. Mg(2+) is required as a cofactor.

It catalyses the reaction 2 (2R)-3-phosphoglycerate + 2 H(+) = D-ribulose 1,5-bisphosphate + CO2 + H2O. The enzyme catalyses D-ribulose 1,5-bisphosphate + O2 = 2-phosphoglycolate + (2R)-3-phosphoglycerate + 2 H(+). In terms of biological role, ruBisCO catalyzes two reactions: the carboxylation of D-ribulose 1,5-bisphosphate, the primary event in carbon dioxide fixation, as well as the oxidative fragmentation of the pentose substrate. Both reactions occur simultaneously and in competition at the same active site. The polypeptide is Ribulose bisphosphate carboxylase large chain (Xanthobacter autotrophicus (strain ATCC BAA-1158 / Py2)).